The following is a 152-amino-acid chain: Protein SprT-like (152 aa).

A SprT-like domain is found at 13–148 (NYVKKVSIED…FACGYCHGRL (136 aa)). His-72 contributes to the Zn(2+) binding site. Residue Glu-73 is part of the active site. His-76 is a binding site for Zn(2+).

This sequence belongs to the SprT family. Zn(2+) serves as cofactor.

The protein localises to the cytoplasm. The sequence is that of Protein SprT-like from Streptococcus agalactiae serotype III (strain NEM316).